We begin with the raw amino-acid sequence, 357 residues long: Holliday junction branch migration complex subunit RuvB (357 aa).

The segment covering 1-15 (MAIQSDSLSSLPDSP) has biased composition (low complexity). The tract at residues 1 to 30 (MAIQSDSLSSLPDSPRIVAPQPVSPNEESI) is disordered. The large ATPase domain (RuvB-L) stretch occupies residues 13–195 (DSPRIVAPQP…FGIVSRLEFY (183 aa)). ATP contacts are provided by residues Leu34, Arg35, Gly76, Lys79, Thr80, Thr81, 142-144 (EDF), Arg185, Tyr195, and Arg232. Thr80 is a binding site for Mg(2+). Residues 196–266 (NTDELARIVT…AAGRALAMLD (71 aa)) form a small ATPAse domain (RuvB-S) region. Positions 269–357 (PQGLDVMDRK…SGGTGELFSK (89 aa)) are head domain (RuvB-H). DNA is bound by residues Arg305, Arg324, and Arg329.

Belongs to the RuvB family. As to quaternary structure, homohexamer. Forms an RuvA(8)-RuvB(12)-Holliday junction (HJ) complex. HJ DNA is sandwiched between 2 RuvA tetramers; dsDNA enters through RuvA and exits via RuvB. An RuvB hexamer assembles on each DNA strand where it exits the tetramer. Each RuvB hexamer is contacted by two RuvA subunits (via domain III) on 2 adjacent RuvB subunits; this complex drives branch migration. In the full resolvosome a probable DNA-RuvA(4)-RuvB(12)-RuvC(2) complex forms which resolves the HJ.

It is found in the cytoplasm. The enzyme catalyses ATP + H2O = ADP + phosphate + H(+). The RuvA-RuvB-RuvC complex processes Holliday junction (HJ) DNA during genetic recombination and DNA repair, while the RuvA-RuvB complex plays an important role in the rescue of blocked DNA replication forks via replication fork reversal (RFR). RuvA specifically binds to HJ cruciform DNA, conferring on it an open structure. The RuvB hexamer acts as an ATP-dependent pump, pulling dsDNA into and through the RuvAB complex. RuvB forms 2 homohexamers on either side of HJ DNA bound by 1 or 2 RuvA tetramers; 4 subunits per hexamer contact DNA at a time. Coordinated motions by a converter formed by DNA-disengaged RuvB subunits stimulates ATP hydrolysis and nucleotide exchange. Immobilization of the converter enables RuvB to convert the ATP-contained energy into a lever motion, pulling 2 nucleotides of DNA out of the RuvA tetramer per ATP hydrolyzed, thus driving DNA branch migration. The RuvB motors rotate together with the DNA substrate, which together with the progressing nucleotide cycle form the mechanistic basis for DNA recombination by continuous HJ branch migration. Branch migration allows RuvC to scan DNA until it finds its consensus sequence, where it cleaves and resolves cruciform DNA. The chain is Holliday junction branch migration complex subunit RuvB from Bordetella bronchiseptica (strain ATCC BAA-588 / NCTC 13252 / RB50) (Alcaligenes bronchisepticus).